Here is a 232-residue protein sequence, read N- to C-terminus: Rho-related GTP-binding protein Rho6 (232 aa).

Residues 23–28 (QCGKTA), 38–45 (YPETYVPT), 67–71 (DTSGS), 125–128 (CKTD), and 169–170 (AF) contribute to the GTP site. Residues 42–50 (YVPTVFENY) carry the Effector region motif. Cys229 is subject to Cysteine methyl ester. The S-geranylgeranyl cysteine moiety is linked to residue Cys229. Residues 230-232 (SIM) constitute a propeptide, removed in mature form.

This sequence belongs to the small GTPase superfamily. Rho family. Binds GRB7 and PLXNB1. Interacts with PLXNA2. Interacts with UBXD5.

The protein resides in the cell membrane. It localises to the cytoplasm. Its subcellular location is the cytoskeleton. Functionally, lacks intrinsic GTPase activity. Has a low affinity for GDP, and constitutively binds GTP. Controls rearrangements of the actin cytoskeleton. Induces the Rac-dependent neuritic process formation in part by disruption of the cortical actin filaments. Causes the formation of many neuritic processes from the cell body with disruption of the cortical actin filaments. The chain is Rho-related GTP-binding protein Rho6 (RND1) from Bos taurus (Bovine).